The following is an 826-amino-acid chain: Disintegrin and metalloproteinase domain-containing protein 8 (826 aa).

A signal peptide spans 1 to 16 (MLGLWLLSVLWTPAVA). Over 17-658 (PGPPLPHVKQ…VSDEQAASTS (642 aa)) the chain is Extracellular. N-linked (GlcNAc...) asparagine glycans are attached at residues Asn89 and Asn260. In terms of domain architecture, Peptidase M12B spans 196–395 (RYVELYVVAD…PQTGCLTNVP (200 aa)). 12 disulfides stabilise this stretch: Cys305–Cys390, Cys346–Cys374, Cys348–Cys357, Cys430–Cys452, Cys443–Cys449, Cys461–Cys481, Cys468–Cys498, Cys493–Cys503, Cys563–Cys615, Cys615–Cys625, Cys619–Cys631, and Cys633–Cys642. A Zn(2+)-binding site is contributed by His329. Residue Glu330 is part of the active site. Residues His333 and His339 each coordinate Zn(2+). In terms of domain architecture, Disintegrin spans 403–489 (GPVCGNLFVE…TCPEDAFQQN (87 aa)). N-linked (GlcNAc...) asparagine glycosylation occurs at Asn431. Positions 611-643 (RSENCSAKCNNHGVCNHKRECHCHKGWAPPNCV) constitute an EGF-like domain. Asn614 is a glycosylation site (N-linked (GlcNAc...) asparagine). A helical transmembrane segment spans residues 659-683 (LPVSVVVVLVILVAAMVIVAGIVIY). Over 684 to 826 (RKAPRQIQRR…VALKVPIQKR (143 aa)) the chain is Cytoplasmic. The tract at residues 701 to 826 (SGLSNPLFYT…VALKVPIQKR (126 aa)) is disordered. Positions 733–748 (PPRPIVKPKRPPPAPP) are enriched in pro residues. Low complexity predominate over residues 749 to 763 (GAVSSSPLPVPVYAP).

Interacts with FST3. It depends on Zn(2+) as a cofactor. Macrophages.

It is found in the membrane. In terms of biological role, possible involvement in extravasation of leukocytes. In Mus musculus (Mouse), this protein is Disintegrin and metalloproteinase domain-containing protein 8 (Adam8).